Here is a 386-residue protein sequence, read N- to C-terminus: S-adenosylmethionine synthase (386 aa).

Histidine 16 is an ATP binding site. Aspartate 18 is a binding site for Mg(2+). Residue glutamate 44 participates in K(+) binding. 2 residues coordinate L-methionine: glutamate 57 and glutamine 100. A flexible loop region spans residues 100–110; that stretch reads QSPDINQGVDR. ATP is bound by residues 164–166, 230–231, aspartate 239, 245–246, alanine 262, and lysine 266; these read DGK, KF, and RK. Position 239 (aspartate 239) interacts with L-methionine. An L-methionine-binding site is contributed by lysine 270.

It belongs to the AdoMet synthase family. In terms of assembly, homotetramer; dimer of dimers. Requires Mg(2+) as cofactor. K(+) serves as cofactor.

The protein localises to the cytoplasm. The catalysed reaction is L-methionine + ATP + H2O = S-adenosyl-L-methionine + phosphate + diphosphate. It functions in the pathway amino-acid biosynthesis; S-adenosyl-L-methionine biosynthesis; S-adenosyl-L-methionine from L-methionine: step 1/1. In terms of biological role, catalyzes the formation of S-adenosylmethionine (AdoMet) from methionine and ATP. The overall synthetic reaction is composed of two sequential steps, AdoMet formation and the subsequent tripolyphosphate hydrolysis which occurs prior to release of AdoMet from the enzyme. The protein is S-adenosylmethionine synthase of Helicobacter hepaticus (strain ATCC 51449 / 3B1).